A 295-amino-acid polypeptide reads, in one-letter code: Sperm acrosome membrane-associated protein 1 (295 aa).

The first 29 residues, 1–29 (MSPGGAGCSAGLLLTVGWLLLAGLQSTCG), serve as a signal peptide directing secretion. The Extracellular portion of the chain corresponds to 30–220 (INVTAVQDPS…SRPDTDAVLV (191 aa)). Residues 39 to 71 (SLVSEGENEGEEEAENDSEVENEPQAEAEQDVS) form a disordered region. The segment covering 44 to 68 (GENEGEEEAENDSEVENEPQAEAEQ) has biased composition (acidic residues). N-linked (GlcNAc...) asparagine glycosylation is present at N72. The chain crosses the membrane as a helical span at residues 221-241 (FVLTIGVIICIFVIFVLIFII). The Cytoplasmic segment spans residues 242-295 (VNWATVKDFWASKASTTEIQSELSSMKYKDSTSLDQSPTEIPGHEDDALSEWNE). S256 bears the Phosphoserine mark. The interval 263–295 (ELSSMKYKDSTSLDQSPTEIPGHEDDALSEWNE) is disordered. Y269 is modified (phosphotyrosine). 2 positions are modified to phosphoserine: S278 and S291.

Interacts with CYLC1; the interaction may be relevant for proper acrosome attachment to the nuclear envelope. N-glycosylated. In terms of tissue distribution, detected in spermatozoa (at protein level).

The protein resides in the cytoplasmic vesicle. The protein localises to the secretory vesicle. It is found in the acrosome inner membrane. Functionally, plays a role in acrosome expansion and establishment of normal sperm morphology during spermatogenesis. Important for male fertility. The polypeptide is Sperm acrosome membrane-associated protein 1 (Sus scrofa (Pig)).